Reading from the N-terminus, the 576-residue chain is Plant intracellular Ras-group-related LRR protein 4 (576 aa).

The segment covering Ala-130–Ala-151 has biased composition (low complexity). Residues Ala-130 to Val-181 are disordered. Residues Ser-160–Arg-180 are compositionally biased toward polar residues. 11 LRR repeats span residues Leu-272–Leu-295, Phe-296–Leu-318, Ser-320–Leu-341, Leu-342–Leu-364, Arg-366–Cys-387, Ser-389–Leu-410, Glu-411–Leu-433, Thr-434–Ala-456, Ser-458–Leu-481, Glu-482–Asn-503, and Lys-505–Lys-527. Residues Gly-528–Tyr-535 carry the GVYW; degenerate motif.

Belongs to the SHOC2 family. Widely expressed.

In terms of biological role, leucine-rich repeat protein that likely mediates protein interactions, possibly in the context of signal transduction. This Oryza sativa subsp. japonica (Rice) protein is Plant intracellular Ras-group-related LRR protein 4 (IRL4).